Here is a 192-residue protein sequence, read N- to C-terminus: Sarcoplasmic calcium-binding protein, beta chain (192 aa).

Residue Ala-1 is modified to N-acetylalanine. EF-hand domains follow at residues 4-39 (WDNRVKYIVRYMYDIDNDGFLDKNDFECLAVRVTLI), 56-91 (IMANLWNEIAELADFNKDGEVTVDEFKQAVQKNCKG), 100-135 (AFKVFIGNQFKTIDVDGDGMVGVDEYRLDCITRSAF), and 136-171 (ADVKEIDDAYDKLCTEEDKKAGGINLARYQELYAQF). Asp-17, Asp-19, Asp-21, Asp-28, Asp-69, Asn-71, Asp-73, Glu-75, Glu-80, Asp-113, Asp-115, Asp-117, Met-119, and Glu-124 together coordinate Ca(2+).

SCPs from crayfish, lobster, and shrimp are polymorphic dimers; three isotypes (alpha-alpha, alpha-beta, and beta-beta) have been identified.

In terms of biological role, like parvalbumins, SCPs seem to be more abundant in fast contracting muscles, but no functional relationship can be established from this distribution. In Penaeus sp. (Penoeid shrimp), this protein is Sarcoplasmic calcium-binding protein, beta chain.